The chain runs to 85 residues: uncharacterized protein (85 aa).

Belongs to the ycf76 family.

Its subcellular location is the plastid. It is found in the chloroplast. This is an uncharacterized protein from Zea mays (Maize).